The sequence spans 654 residues: tRNA 5-methylaminomethyl-2-thiouridine biosynthesis bifunctional protein MnmC (654 aa).

The tract at residues 1 to 236 is tRNA (mnm(5)s(2)U34)-methyltransferase; sequence MSTLLQHAQI…KWEVMSGAYV (236 aa). Positions 262–654 are FAD-dependent cmnm(5)s(2)U34 oxidoreductase; the sequence is IGAGLAGSTT…FALRRLIRGK (393 aa).

In the N-terminal section; belongs to the methyltransferase superfamily. tRNA (mnm(5)s(2)U34)-methyltransferase family. It in the C-terminal section; belongs to the DAO family. FAD is required as a cofactor.

Its subcellular location is the cytoplasm. The enzyme catalyses 5-aminomethyl-2-thiouridine(34) in tRNA + S-adenosyl-L-methionine = 5-methylaminomethyl-2-thiouridine(34) in tRNA + S-adenosyl-L-homocysteine + H(+). Its function is as follows. Catalyzes the last two steps in the biosynthesis of 5-methylaminomethyl-2-thiouridine (mnm(5)s(2)U) at the wobble position (U34) in tRNA. Catalyzes the FAD-dependent demodification of cmnm(5)s(2)U34 to nm(5)s(2)U34, followed by the transfer of a methyl group from S-adenosyl-L-methionine to nm(5)s(2)U34, to form mnm(5)s(2)U34. This Pseudomonas putida (strain GB-1) protein is tRNA 5-methylaminomethyl-2-thiouridine biosynthesis bifunctional protein MnmC.